Here is a 149-residue protein sequence, read N- to C-terminus: UPF0208 membrane protein PBPRA2797 (149 aa).

2 consecutive transmembrane segments (helical) span residues 41-60 (FATR…QMAF) and 65-87 (ALPQ…LWWL).

The protein belongs to the UPF0208 family.

It localises to the cell inner membrane. The sequence is that of UPF0208 membrane protein PBPRA2797 from Photobacterium profundum (strain SS9).